A 425-amino-acid chain; its full sequence is uncharacterized protein (425 aa).

The CHY-type zinc finger occupies 135 to 202 (KEQEILGCSH…AAQYCKYCKN (68 aa)). Zn(2+)-binding residues include Cys-142, His-144, Cys-153, Cys-156, Cys-162, Cys-165, His-166, His-172, Cys-184, Cys-187, Cys-197, Cys-200, Cys-209, Cys-212, His-225, Cys-226, Cys-229, Cys-232, His-244, Cys-245, Cys-248, Cys-251, His-260, and Cys-262. The CTCHY-type zinc-finger motif lies at 204–270 (MGRYYCNKCK…RCIERSTDCN (67 aa)). The RING-type; atypical zinc finger occupies 271–313 (CPICGEYMFNSRERVIFLSCSHPLHQRCHEEYIRTNYRCPTCY).

This is an uncharacterized protein from Schizosaccharomyces pombe (strain 972 / ATCC 24843) (Fission yeast).